Reading from the N-terminus, the 136-residue chain is MLKRFSISLDDNLLEIFDQHIAEKAYNNRSEAIRDLIRKNFVLKEWEEDRDVMGVISLIYDHHQSQLQKKVTDLQHDFHHHIVSTTHVHMDHDNCLEVIIVKGRAGDVIELADGLAALKGVRDSNLAMNSTGKSLH.

Ni(2+) is bound by residues histidine 76, histidine 87, histidine 89, and cysteine 95.

Belongs to the transcriptional regulatory CopG/NikR family. Ni(2+) serves as cofactor.

Functionally, transcriptional regulator. This chain is Putative nickel-responsive regulator, found in Desulfotalea psychrophila (strain LSv54 / DSM 12343).